The following is a 617-amino-acid chain: Phosphatidylinositol-3,5-bisphosphate 3-phosphatase MTMR6 (617 aa).

The 101-residue stretch at 1–101 (MEHIRTTKVE…YNSLLQLSKQ (101 aa)) folds into the GRAM domain. The interval 2–141 (EHIRTTKVEQ…AEYERMGVPN (140 aa)) is interaction with RAB1B. Residue Tyr108 is modified to Phosphotyrosine. Residues 124 to 499 (GWQLIDLAAE…FNFKFWRNMY (376 aa)) enclose the Myotubularin phosphatase domain. Residues Asn248, Asn273, and Ile274 each contribute to the a 1,2-diacyl-sn-glycero-3-phospho-(1D-myo-inositol-3,5-bisphosphate) site. Residues Asn248, Asn273, and Ile274 each contribute to the a 1,2-diacyl-sn-glycero-3-phospho-(1D-myo-inositol-3-phosphate) site. Residue Cys336 is the Phosphocysteine intermediate of the active site. Positions 337, 338, 339, 340, 341, 342, 378, and 382 each coordinate a 1,2-diacyl-sn-glycero-3-phospho-(1D-myo-inositol-3,5-bisphosphate). Residues Ser337, Asp338, Gly339, Trp340, Asp341, and Arg342 each contribute to the a 1,2-diacyl-sn-glycero-3-phospho-(1D-myo-inositol-3-phosphate) site. Residue Arg382 participates in a 1,2-diacyl-sn-glycero-3-phospho-(1D-myo-inositol-3-phosphate) binding. Ser557, Ser585, and Ser607 each carry phosphoserine.

The protein belongs to the protein-tyrosine phosphatase family. Non-receptor class myotubularin subfamily. In terms of assembly, homodimer. Heterodimer (via C-terminus) with MTMR9 (via C-terminus). Interacts with ALKBH4. Interacts with KCNN4. Interacts (via GRAM domain) with RAB1B (in GDP-bound form); the interaction regulates MTMR6 recruitment to the endoplasmic reticulum-Golgi intermediate compartment. In terms of tissue distribution, isoform 1: Ubiquitously expressed including in heart, brain, spleen, lung, liver, muscle, kidney and testis (at protein level). Isoform 2: Expressed in testis (at protein level).

Its subcellular location is the cytoplasm. It localises to the endoplasmic reticulum-Golgi intermediate compartment. It is found in the cell projection. The protein resides in the ruffle membrane. The protein localises to the endoplasmic reticulum. It catalyses the reaction a 1,2-diacyl-sn-glycero-3-phospho-(1D-myo-inositol-3,5-bisphosphate) + H2O = a 1,2-diacyl-sn-glycero-3-phospho-(1D-myo-inositol-5-phosphate) + phosphate. It carries out the reaction a 1,2-diacyl-sn-glycero-3-phospho-(1D-myo-inositol-3-phosphate) + H2O = a 1,2-diacyl-sn-glycero-3-phospho-(1D-myo-inositol) + phosphate. The catalysed reaction is 1,2-dioctanoyl-sn-glycero-3-phospho-(1D-myo-inositol-3,5-bisphosphate) + H2O = 1,2-dioctanoyl-sn-glycero-3-phospho-(1D-myo-inositol-5-phosphate) + phosphate. The enzyme catalyses 1,2-dioctanoyl-sn-glycero-3-phospho-(1-D-myo-inositol-3-phosphate) + H2O = 1,2-dioctanoyl-sn-glycero-3-phospho-(1D-myo-inositol) + phosphate. Allosterically activated by phosphatidylserine and/or phosphatidylinositol 4-phosphate (PtdIns(4)P), and phosphatidylinositol 5-phosphate (PtdIns(5)P). Interaction with MTMR9 increases catalytic activity towards phosphatidylinositol 3,5-bisphosphate. Lipid phosphatase that specifically dephosphorylates the D-3 position of phosphatidylinositol 3-phosphate and phosphatidylinositol 3,5-bisphosphate, generating phosphatidylinositol and phosphatidylinositol 5-phosphate. Binds with high affinity to phosphatidylinositol 3,5-bisphosphate (PtdIns(3,5)P2) but also to phosphatidylinositol 3-phosphate (PtdIns(3)P), phosphatidylinositol 4-phosphate (PtdIns(4)P), and phosphatidylinositol 5-phosphate (PtdIns(5)P), phosphatidic acid and phosphatidylserine. Negatively regulates ER-Golgi protein transport. Probably in association with MTMR9, plays a role in the late stages of macropinocytosis by dephosphorylating phosphatidylinositol 3-phosphate in membrane ruffles. Acts as a negative regulator of KCNN4/KCa3.1 channel activity in CD4(+) T-cells possibly by decreasing intracellular levels of phosphatidylinositol 3-phosphate. Negatively regulates proliferation of reactivated CD4(+) T-cells. In complex with MTMR9, negatively regulates DNA damage-induced apoptosis. The formation of the MTMR6-MTMR9 complex stabilizes both MTMR6 and MTMR9 protein levels. This Mus musculus (Mouse) protein is Phosphatidylinositol-3,5-bisphosphate 3-phosphatase MTMR6.